The following is a 304-amino-acid chain: Acetylglutamate kinase (304 aa).

Substrate contacts are provided by residues 71 to 72 (GG), R93, and N193.

It belongs to the acetylglutamate kinase family. ArgB subfamily.

The protein localises to the cytoplasm. It carries out the reaction N-acetyl-L-glutamate + ATP = N-acetyl-L-glutamyl 5-phosphate + ADP. The protein operates within amino-acid biosynthesis; L-arginine biosynthesis; N(2)-acetyl-L-ornithine from L-glutamate: step 2/4. In terms of biological role, catalyzes the ATP-dependent phosphorylation of N-acetyl-L-glutamate. This Streptomyces avermitilis (strain ATCC 31267 / DSM 46492 / JCM 5070 / NBRC 14893 / NCIMB 12804 / NRRL 8165 / MA-4680) protein is Acetylglutamate kinase.